The primary structure comprises 338 residues: MNLQRFPRYPLTFGPTPIQPLARLSKHLGGKVHLYAKREDCNSGLAFGGNKTRKLEYLIPEALAQGCDTLVSIGGIQSNQTRQVAAVAAHLGMKCVLVQENWVNYSDAVYDRVGNIQMSRILGADVRLVPDGFDIGFRRSWEDALESVRAAGGKPYAIPAGCSDHPLGGLGFVGFAEEVRAQEAELGFKFDYVVVCSVTGSTQAGMVVGFAADGRADRVIGVDASAKPAQTREQITRIARQTAEKVGLERDIMRADVVLDERFAGPEYGLPNEGTLEAIRLCARTEGMLTDPVYEGKSMHGMIEMVRNGEFPEGSRVLYAHLGGVPALNGYSFIFRDG.

The residue at position 51 (Lys51) is an N6-(pyridoxal phosphate)lysine. Ser78 acts as the Nucleophile in catalysis.

This sequence belongs to the ACC deaminase/D-cysteine desulfhydrase family. As to quaternary structure, homotrimer. Pyridoxal 5'-phosphate serves as cofactor.

The catalysed reaction is 1-aminocyclopropane-1-carboxylate + H2O = 2-oxobutanoate + NH4(+). Functionally, catalyzes a cyclopropane ring-opening reaction, the irreversible conversion of 1-aminocyclopropane-1-carboxylate (ACC) to ammonia and alpha-ketobutyrate. Allows growth on ACC as a nitrogen source. The protein is 1-aminocyclopropane-1-carboxylate deaminase of Pseudomonas sp. (strain ACP).